A 252-amino-acid chain; its full sequence is Cytochrome b6-f complex iron-sulfur subunit, chloroplastic (252 aa).

The helical transmembrane segment at 94–114 (LVLAAVAPVVASAGGCYLYYF) threads the bilayer. Residues 141 to 235 (WFKSHKKNAR…VEDDNGKILL (95 aa)) enclose the Rieske domain. Positions 181, 183, 199, and 202 each coordinate [2Fe-2S] cluster. Residues Cys186 and Cys201 are joined by a disulfide bond.

The protein belongs to the Rieske iron-sulfur protein family. In terms of assembly, the 4 large subunits of the cytochrome b6-f complex are cytochrome b6, subunit IV (17 kDa polypeptide, petD), cytochrome f and the Rieske protein, while the 4 small subunits are petG, petL, petM and petN. The complex functions as a dimer. [2Fe-2S] cluster is required as a cofactor.

It is found in the plastid. The protein localises to the chloroplast thylakoid membrane. It carries out the reaction 2 oxidized [plastocyanin] + a plastoquinol + 2 H(+)(in) = 2 reduced [plastocyanin] + a plastoquinone + 4 H(+)(out). Component of the cytochrome b6-f complex, which mediates electron transfer between photosystem II (PSII) and photosystem I (PSI), cyclic electron flow around PSI, and state transitions. The protein is Cytochrome b6-f complex iron-sulfur subunit, chloroplastic (petC) of Bigelowiella natans (Pedinomonas minutissima).